A 267-amino-acid polypeptide reads, in one-letter code: Tryptophan synthase alpha chain (267 aa).

Residues Glu-49 and Asp-60 each act as proton acceptor in the active site.

Belongs to the TrpA family. Tetramer of two alpha and two beta chains.

The enzyme catalyses (1S,2R)-1-C-(indol-3-yl)glycerol 3-phosphate + L-serine = D-glyceraldehyde 3-phosphate + L-tryptophan + H2O. The protein operates within amino-acid biosynthesis; L-tryptophan biosynthesis; L-tryptophan from chorismate: step 5/5. The alpha subunit is responsible for the aldol cleavage of indoleglycerol phosphate to indole and glyceraldehyde 3-phosphate. The protein is Tryptophan synthase alpha chain of Acinetobacter baylyi (strain ATCC 33305 / BD413 / ADP1).